We begin with the raw amino-acid sequence, 79 residues long: MDTKQGVLDILNDLTGEDLSDQMDENIFDNGLMDSMASVQMLLSLQEKFDIDVPVSEFNRAEWDTPNKIVAKVESLENE.

Residues 1 to 77 (MDTKQGVLDI…KIVAKVESLE (77 aa)) form the Carrier domain. Ser35 carries the O-(pantetheine 4'-phosphoryl)serine modification.

This sequence belongs to the DltC family. Post-translationally, 4'-phosphopantetheine is transferred from CoA to a specific serine of apo-DCP.

The protein localises to the cytoplasm. The protein operates within cell wall biogenesis; lipoteichoic acid biosynthesis. Carrier protein involved in the D-alanylation of lipoteichoic acid (LTA). The loading of thioester-linked D-alanine onto DltC is catalyzed by D-alanine--D-alanyl carrier protein ligase DltA. The DltC-carried D-alanyl group is further transferred to cell membrane phosphatidylglycerol (PG) by forming an ester bond, probably catalyzed by DltD. D-alanylation of LTA plays an important role in modulating the properties of the cell wall in Gram-positive bacteria, influencing the net charge of the cell wall. The polypeptide is D-alanyl carrier protein (Lactobacillus helveticus (strain DPC 4571)).